A 608-amino-acid chain; its full sequence is Aspartate--tRNA(Asp/Asn) ligase (608 aa).

L-aspartate is bound at residue E175. The interval 199-202 (QLFK) is aspartate. L-aspartate is bound at residue R221. ATP contacts are provided by residues 221–223 (RDE) and Q230. H453 lines the L-aspartate pocket. E487 contributes to the ATP binding site. R494 is an L-aspartate binding site. 539–542 (GWDR) is an ATP binding site. The disordered stretch occupies residues 566–608 (IDPLTDAPAAITPQQRKEAGIDAKPKPKAEAQAEAQAEESAEK). Residues 580-596 (QRKEAGIDAKPKPKAEA) show a composition bias toward basic and acidic residues.

It belongs to the class-II aminoacyl-tRNA synthetase family. Type 1 subfamily. Homodimer.

Its subcellular location is the cytoplasm. The enzyme catalyses tRNA(Asx) + L-aspartate + ATP = L-aspartyl-tRNA(Asx) + AMP + diphosphate. Its function is as follows. Aspartyl-tRNA synthetase with relaxed tRNA specificity since it is able to aspartylate not only its cognate tRNA(Asp) but also tRNA(Asn). Reaction proceeds in two steps: L-aspartate is first activated by ATP to form Asp-AMP and then transferred to the acceptor end of tRNA(Asp/Asn). The chain is Aspartate--tRNA(Asp/Asn) ligase from Corynebacterium glutamicum (strain R).